We begin with the raw amino-acid sequence, 582 residues long: BTB/POZ domain and ankyrin repeat-containing protein NPR1 (582 aa).

Positions 1–18 are enriched in polar residues; the sequence is MEPPTSHVTNAFSDSDSA. Positions 1–25 are disordered; it reads MEPPTSHVTNAFSDSDSASVEEGGA. One can recognise a BTB domain in the interval 55 to 140; the sequence is ADARIAVPGG…VLDYLYSGRV (86 aa). A C2HC NPR-type zinc finger spans residues 147–161; it reads ACLCVDEDCAHVGCH. 4 residues coordinate Zn(2+): cysteine 150, cysteine 155, histidine 157, and cysteine 160. ANK repeat units follow at residues 229–258, 269–299, 301–328, and 332–361; these read RSNL…SLGL, KHVR…NLDD, FALH…DVNH, and RGYT…RPAD. Positions 391 to 526 are salicylic acid-binding core (SBC); the sequence is PSPKDRLCIE…VLDKIMDDET (136 aa). Arginine 436 lines the salicylate pocket. A disordered region spans residues 551-582; the sequence is QKAFHEDKEENDRSGLSSSSSSTSIGAIRPRR. The span at 553-563 shows a compositional bias: basic and acidic residues; sequence AFHEDKEENDR. Positions 564–574 are enriched in low complexity; sequence SGLSSSSSSTS.

Belongs to the plant 'ANKYRIN-BTB/POZ' family. 'NPR1-like' subfamily. As to quaternary structure, oligomer in an uninduced state; disulfide-linked. Forms activated monomer upon changes in cellular redox potential. Interacts with TGA2.1, TGA2.2, TGA2.3, LG2, TGAL1 and TGAL4. Interacts with NRR, RH1, RH2 and RH3.

It is found in the cytoplasm. Its subcellular location is the nucleus. It localises to the nuclear body. Its pathway is protein modification; protein ubiquitination. Salicylic acid (SA)-binding substrate-specific adapter of an E3 ubiquitin-protein ligase complex (CUL3-RBX1-BTB) which mediates the ubiquitination and subsequent proteasomal degradation of target proteins. Transcription cofactor that represses gene expression in the absence of salicylic acid (SA), when attached to negative cis-elements (W-box) with WRKY transcription factors, but stimulates gene expression upon activation by SA, when sumoylated and attached to positive cis-elements (as-1) with TGA transcription factors, thus confering immunity through a series of gene regulations ending in a significant increase in antimicrobial and defense genes expression. Key positive factor of disease resistance. Plays an essential role in benzothiadiazole (BTH)-induced resistance to the blast fungus disease caused by Magnaporthe oryzae. Involved in defense response against the bacterial blight disease caused by Xanthomonas oryzae pv. oryzae (Xoo). Over-expression of NPR1/NH1 confers disease resistance to Xoo, but also enhances herbivore susceptibility. Functions as a transcriptional coactivator of TGA2.1 and LG2 in vitro. Involved in defense response against herbivore. Plants silencing NPR1/NH1 have increased herbivore-induced trypsin proteinase inhibitors and volatiles, which reduces the performance of the striped stem borer (SSB) Chilo suppressalis. The polypeptide is BTB/POZ domain and ankyrin repeat-containing protein NPR1 (Oryza sativa subsp. japonica (Rice)).